The sequence spans 249 residues: Adenylate kinase (249 aa).

43-48 (GAGKGT) lines the ATP pocket. An NMP region spans residues 63-92 (ATGDMLRAQVAAKSALGVEAKKIMDQGGLV). AMP-binding positions include T64, R69, 90 to 92 (GLV), 119 to 122 (GFPR), and Q126. Positions 160–197 (GRLVHPASGRSYHKLFNPPKKDMIDDVSGDALVQRSDD) are LID. ATP contacts are provided by residues R161 and 170–171 (SY). Residues R194 and R205 each contribute to the AMP site. Residue Q233 participates in ATP binding.

This sequence belongs to the adenylate kinase family. AK2 subfamily. As to quaternary structure, monomer.

The protein localises to the cytoplasm. The protein resides in the cytosol. It localises to the mitochondrion intermembrane space. It carries out the reaction AMP + ATP = 2 ADP. Its function is as follows. Catalyzes the reversible transfer of the terminal phosphate group between ATP and AMP. Plays an important role in cellular energy homeostasis and in adenine nucleotide metabolism. Adenylate kinase activity is critical for regulation of the phosphate utilization and the AMP de novo biosynthesis pathways. This Debaryomyces hansenii (strain ATCC 36239 / CBS 767 / BCRC 21394 / JCM 1990 / NBRC 0083 / IGC 2968) (Yeast) protein is Adenylate kinase.